The following is a 351-amino-acid chain: Protein Wnt-2b-A (351 aa).

The signal sequence occupies residues M1–V16. 11 disulfides stabilise this stretch: C67–C78, C118–C126, C128–C148, C197–C211, C199–C206, C269–C300, C285–C295, C299–C339, C315–C330, C317–C327, and C322–C323. A glycan (N-linked (GlcNAc...) asparagine) is linked at N77. S203 carries the O-palmitoleoyl serine; by PORCN lipid modification.

This sequence belongs to the Wnt family. In terms of processing, palmitoleoylation is required for efficient binding to frizzled receptors. Depalmitoleoylation leads to Wnt signaling pathway inhibition. Expressed maternally in both vegetal and animal blastomeres with enrichment in the animal hemisphere. Expressed zygotically near the prosencephalic-mesencephalic boundary of the developing brain in neurula and tailbud stages, and also in non-brain areas at tadpole stages.

The protein localises to the secreted. The protein resides in the extracellular space. It localises to the extracellular matrix. Functionally, ligand for members of the frizzled family of seven transmembrane receptors. Functions in the canonical Wnt/beta-catenin signaling pathway. This chain is Protein Wnt-2b-A (wnt2b-a), found in Xenopus laevis (African clawed frog).